Consider the following 90-residue polypeptide: MGQGKSREEKGTNSTNRAEILPDTTYLGPLSCKSCWQKFDSLVRCHDHYLCRHCLNLLLSVSDRCPLCKYPLPTRLKISTAPSSPPPYEE.

Gly2 carries the N-myristoyl glycine; by host lipid modification. Residues 32-68 form an RING-type; atypical zinc finger; the sequence is CKSCWQKFDSLVRCHDHYLCRHCLNLLLSVSDRCPLC. Positions 85–88 match the PPXY motif motif; sequence PPPY.

Belongs to the arenaviridae Z protein family. Interacts with protein NP; this interaction probably directs the encapsidated genome to budding sites. Interacts (via RING-type zinc finger) with polymerase L; this interaction inhibits viral transcription and replication, Z partially blocks the product exit tunnel for the releasing nascent RNA product. Interacts with the glycoprotein complex; this interaction plays a role in virion budding. Interacts (via RING-type zinc finger) with host EIF4E; this interaction results in conformational changes of both interacting proteins and reduces EIF4E affinity for its substrate, the 5'-m7 G cap structure. Interacts (via late-budding domain) with host TSG101; this interaction is essential for budding and release of viral particles. Interacts with host RPLP0; this interaction may serve to load ribosome-like particles inside the virion. Interacts with host PML; this interaction induces PML bodies redistribution in the cytoplasm upon viral infection. In terms of processing, myristoylation is required for the role of RING finger protein Z in assembly and budding.

Its subcellular location is the virion. The protein resides in the host cytoplasm. The protein localises to the host perinuclear region. It is found in the host cell membrane. In terms of biological role, plays a crucial role in virion assembly and budding. Expressed late in the virus life cycle, it acts as an inhibitor of viral transcription and RNA synthesis by interacting with the viral polymerase L. Presumably recruits the NP encapsidated genome to cellular membranes at budding sites via direct interaction with NP. Plays critical roles in the final steps of viral release by interacting with host TSG101, a member of the vacuolar protein-sorting pathway and using other cellular host proteins involved in vesicle formation pathway. The budding of the virus progeny occurs after association of protein Z with the viral glycoprotein complex SSP-GP1-GP2 at the cell periphery, step that requires myristoylation of protein Z. Also selectively represses protein production by associating with host EIF4E. In cell-based minigenome assay, has an inhibitory effect on the ribonucleoprotein machinery (vRNP), which is responsible for the replication and transcription of the viral genome. The polypeptide is RING finger protein Z (Homo sapiens (Human)).